The sequence spans 310 residues: Oxygen-dependent coproporphyrinogen-III oxidase (310 aa).

A substrate-binding site is contributed by Ser97. A divalent metal cation contacts are provided by His101 and His111. Residue His111 is the Proton donor of the active site. Substrate is bound at residue 113–115 (NFR). A divalent metal cation is bound by residues His150 and His180. Positions 245 to 280 (YVEFNLLYDRGTRFGLEFGGRTESILMSLPPRVVWR) are important for dimerization. 263–265 (GGR) lines the substrate pocket.

The protein belongs to the aerobic coproporphyrinogen-III oxidase family. Homodimer. A divalent metal cation serves as cofactor.

It localises to the cytoplasm. The enzyme catalyses coproporphyrinogen III + O2 + 2 H(+) = protoporphyrinogen IX + 2 CO2 + 2 H2O. The protein operates within porphyrin-containing compound metabolism; protoporphyrin-IX biosynthesis; protoporphyrinogen-IX from coproporphyrinogen-III (O2 route): step 1/1. Functionally, involved in the heme biosynthesis. Catalyzes the aerobic oxidative decarboxylation of propionate groups of rings A and B of coproporphyrinogen-III to yield the vinyl groups in protoporphyrinogen-IX. In Coxiella burnetii (strain RSA 331 / Henzerling II), this protein is Oxygen-dependent coproporphyrinogen-III oxidase.